Consider the following 248-residue polypeptide: PF03932 family protein CutC (248 aa).

The protein belongs to the CutC family. As to quaternary structure, homodimer.

The protein resides in the cytoplasm. This chain is PF03932 family protein CutC, found in Escherichia coli O157:H7.